Here is a 1148-residue protein sequence, read N- to C-terminus: Phospholipid-transporting ATPase IB (1148 aa).

The Cytoplasmic segment spans residues methionine 1 to arginine 54. Threonine 5 is modified (phosphothreonine). Residues alanine 55–threonine 75 traverse the membrane as a helical segment. Residues glycine 76–threonine 79 lie on the Exoplasmic loop side of the membrane. A helical membrane pass occupies residues threonine 80 to phenylalanine 100. Residues lysine 101 to glutamine 276 are Cytoplasmic-facing. A helical membrane pass occupies residues isoleucine 277 to tyrosine 297. The Exoplasmic loop portion of the chain corresponds to tryptophan 298–leucine 324. Residues threonine 325–valine 345 form a helical membrane-spanning segment. Residues lysine 346 to valine 847 lie on the Cytoplasmic side of the membrane. The active-site 4-aspartylphosphate intermediate is the aspartate 388. Residues aspartate 388, lysine 389, threonine 390, glutamate 488, phenylalanine 529, lysine 552, arginine 585, threonine 665, glycine 666, aspartate 667, arginine 755, and lysine 761 each coordinate ATP. Mg(2+) is bound at residue aspartate 388. A Mg(2+)-binding site is contributed by threonine 390. Aspartate 781 is a Mg(2+) binding site. Residues asparagine 784 and aspartate 785 each contribute to the ATP site. Aspartate 785 is a binding site for Mg(2+). A helical membrane pass occupies residues valine 848–phenylalanine 868. Over glutamate 869–arginine 870 the chain is Exoplasmic loop. The chain crosses the membrane as a helical span at residues tryptophan 871 to phenylalanine 891. Topologically, residues glutamate 892–lysine 919 are cytoplasmic. Residues valine 920–methionine 940 traverse the membrane as a helical segment. Over lysine 941–tyrosine 957 the chain is Exoplasmic loop. Residues leucine 958–leucine 978 form a helical membrane-spanning segment. Residues glutamate 979–histidine 988 lie on the Cytoplasmic side of the membrane. The chain crosses the membrane as a helical span at residues leucine 989–tryptophan 1009. At proline 1010–threonine 1023 the chain is on the exoplasmic loop side. A helical membrane pass occupies residues methionine 1024 to isoleucine 1044. Residues glutamate 1045 to lysine 1148 lie on the Cytoplasmic side of the membrane. Residues proline 1102–histidine 1126 form a disordered region.

This sequence belongs to the cation transport ATPase (P-type) (TC 3.A.3) family. Type IV subfamily. In terms of assembly, component of a P4-ATPase flippase complex which consists of a catalytic alpha subunit and an accessory beta subunit. Interacts with TMEM30A to form a flippase complex. Mg(2+) serves as cofactor. Expressed in retinal photoreceptor cells and testis.

It is found in the membrane. The protein localises to the golgi apparatus membrane. Its subcellular location is the endosome membrane. The protein resides in the cell membrane. It localises to the photoreceptor outer segment membrane. It is found in the photoreceptor inner segment membrane. The catalysed reaction is ATP + H2O + phospholipidSide 1 = ADP + phosphate + phospholipidSide 2.. The enzyme catalyses a 1,2-diacyl-sn-glycero-3-phospho-L-serine(out) + ATP + H2O = a 1,2-diacyl-sn-glycero-3-phospho-L-serine(in) + ADP + phosphate + H(+). It catalyses the reaction a 1,2-diacyl-sn-glycero-3-phosphoethanolamine(in) + ATP + H2O = a 1,2-diacyl-sn-glycero-3-phosphoethanolamine(out) + ADP + phosphate + H(+). ATPase activity is stimulated by phosphatidylserine (PS) and minimally by phosphatidylethanolamine (PE). ATPase activity is inhibited by N-ethylmaleimide (NEM) and vanadate. Flippase activity is inhibited by NEM and 1,2-dioleoyl-sn-glycero-3-phospho-L-serine (DOPS). Its function is as follows. Catalytic component of a P4-ATPase flippase complex which catalyzes the hydrolysis of ATP coupled to the transport of aminophospholipids from the outer to the inner leaflet of various membranes and ensures the maintenance of asymmetric distribution of phospholipids. Able to translocate phosphatidylserine, but not phosphatidylcholine. Phospholipid translocation seems also to be implicated in vesicle formation and in uptake of lipid signaling molecules. Reconstituted to liposomes, the ATP8A2:TMEM30A flippase complex predominantly transports phosphatidylserine (PS) and to a lesser extent phosphatidylethanolamine (PE). Phospholipid translocation is not associated with a countertransport of an inorganic ion or other charged substrate from the cytoplasmic side toward the exoplasm in connection with the phosphorylation from ATP. ATP8A2:TMEM30A may be involved in regulation of neurite outgrowth. Proposed to function in the generation and maintenance of phospholipid asymmetry in photoreceptor disk membranes and neuronal axon membranes. May be involved in vesicle trafficking in neuronal cells. Required for normal visual and auditory function; involved in photoreceptor and inner ear spiral ganglion cell survival. The chain is Phospholipid-transporting ATPase IB from Bos taurus (Bovine).